Reading from the N-terminus, the 364-residue chain is Spermidine/putrescine import ATP-binding protein PotA (364 aa).

The 231-residue stretch at Ile6–Ile236 folds into the ABC transporter domain. Gly38–Thr45 is an ATP binding site.

The protein belongs to the ABC transporter superfamily. Spermidine/putrescine importer (TC 3.A.1.11.1) family. In terms of assembly, the complex is composed of two ATP-binding proteins (PotA), two transmembrane proteins (PotB and PotC) and a solute-binding protein (PotD).

The protein resides in the cell inner membrane. It carries out the reaction ATP + H2O + polyamine-[polyamine-binding protein]Side 1 = ADP + phosphate + polyamineSide 2 + [polyamine-binding protein]Side 1.. In terms of biological role, part of the ABC transporter complex PotABCD involved in spermidine/putrescine import. Responsible for energy coupling to the transport system. This Legionella pneumophila (strain Paris) protein is Spermidine/putrescine import ATP-binding protein PotA.